Reading from the N-terminus, the 218-residue chain is Keratin-associated protein 10-8 (218 aa).

Residues 26 to 202 (CGNQVSSPSA…FCQPSCCHPA (177 aa)) form a 16 X 5 AA repeats of C-C-X(3) region. 16 consecutive repeat copies span residues 50-54 (CCEPT), 55-59 (CCAPS), 60-64 (CCAPA), 86-90 (CSSSS), 96-100 (CCVPV), 101-105 (CCRPV), 111-115 (CCRPV), 121-125 (CCTPV), 131-135 (CCRPV), 136-140 (CCRPV), 141-145 (CCRPV), 151-155 (CCRPM), 161-167 (PCSAPSS), 168-172 (CCRPS), 187-191 (CCVPT), and 198-202 (CCHPA).

The protein belongs to the KRTAP type 10 family. Interacts with hair keratins.

In the hair cortex, hair keratin intermediate filaments are embedded in an interfilamentous matrix, consisting of hair keratin-associated proteins (KRTAP), which are essential for the formation of a rigid and resistant hair shaft through their extensive disulfide bond cross-linking with abundant cysteine residues of hair keratins. The matrix proteins include the high-sulfur and high-glycine-tyrosine keratins. This Bos taurus (Bovine) protein is Keratin-associated protein 10-8.